The chain runs to 467 residues: MVKKLTGKSFALSALVAASFVAAGAMASDKTEPRNDVYKDKFSKQYNSWHATAESEAITDALEQDPALVILWAGYGFAKDYNAPRGHMYALTDVRNTLRTGAPTSAEDGPMPMACWSCKSPDVPRLIEEQGESGYFTGKWAKGGAEVANTIGCSDCHEKGTPKLRLSRPFASRAMEAIGTPFDKASKQDKESMVCAQCHVEYYFEKTDDRKGFVKFPWDGGTTVENMEVYYDAIQFADWTHAVSKTPMLKAQHPGYETWKLGTHGQNNVSCVDCHMPKVTNEQGKKFTDHKVGNPFDRFEETCGTCHSQDKEHMLTVYKDNKSKVMELKSKAEAQLVAAHFEAGAAWKAGATEDEMKPILTNIRHAQWRWDYAIASHGVSAHAPAEALRVLGTAVDKAANARVQLAQLLATKGVKQPIELPDISTKAKAQAALGMDMDKMNADKAKFKQEMLPKWEADAKAREATYK.

Positions 1–27 (MVKKLTGKSFALSALVAASFVAAGAMA) are cleaved as a signal peptide. Residue His87 participates in heme c binding. Heme-binding residues include Cys115, Cys118, and Lys119. 6 residues coordinate heme c: Cys153, Cys156, His157, Cys195, Cys198, and His199. Ca(2+) contacts are provided by Glu201, Tyr202, Lys250, and Gln252. Tyr202 contributes to the substrate binding site. His253 lines the substrate pocket. Positions 264, 271, 274, 275, 290, 303, 306, 307, and 382 each coordinate heme c.

This sequence belongs to the cytochrome c-552 family. Ca(2+) serves as cofactor. Requires heme c as cofactor.

It is found in the periplasm. It catalyses the reaction 6 Fe(III)-[cytochrome c] + NH4(+) + 2 H2O = 6 Fe(II)-[cytochrome c] + nitrite + 8 H(+). The protein operates within nitrogen metabolism; nitrate reduction (assimilation). In terms of biological role, catalyzes the reduction of nitrite to ammonia, consuming six electrons in the process. The protein is Cytochrome c-552 of Shewanella amazonensis (strain ATCC BAA-1098 / SB2B).